Consider the following 115-residue polypeptide: Probable 4-amino-4-deoxy-L-arabinose-phosphoundecaprenol flippase subunit ArnE (115 aa).

4 helical membrane-spanning segments follow: residues 1 to 21 (MIVG…GQLC), 43 to 63 (WLAL…NVLQ), 65 to 85 (LPLS…TLAA), and 93 to 113 (TTAR…LMSI). Residues 44–113 (LALAVLLLGL…IMLGILLMSI (70 aa)) form the EamA domain.

Belongs to the ArnE family. In terms of assembly, heterodimer of ArnE and ArnF.

It is found in the cell inner membrane. It participates in bacterial outer membrane biogenesis; lipopolysaccharide biosynthesis. Its function is as follows. Translocates 4-amino-4-deoxy-L-arabinose-phosphoundecaprenol (alpha-L-Ara4N-phosphoundecaprenol) from the cytoplasmic to the periplasmic side of the inner membrane. This is Probable 4-amino-4-deoxy-L-arabinose-phosphoundecaprenol flippase subunit ArnE from Serratia proteamaculans (strain 568).